The sequence spans 166 residues: UPF0304 protein VP0990 (166 aa).

The protein belongs to the UPF0304 family.

The polypeptide is UPF0304 protein VP0990 (Vibrio parahaemolyticus serotype O3:K6 (strain RIMD 2210633)).